The sequence spans 211 residues: 3-demethoxyubiquinol 3-hydroxylase (211 aa).

A disordered region spans residues 22 to 43 (KHPLNPNRKSPSANTVDGQLSD). A compositionally biased stretch (polar residues) spans 28–42 (NRKSPSANTVDGQLS). Glutamate 60, glutamate 90, histidine 93, glutamate 142, glutamate 174, and histidine 177 together coordinate Fe cation.

Belongs to the COQ7 family. The cofactor is Fe cation.

Its subcellular location is the cell membrane. The catalysed reaction is a 5-methoxy-2-methyl-3-(all-trans-polyprenyl)benzene-1,4-diol + AH2 + O2 = a 3-demethylubiquinol + A + H2O. Its pathway is cofactor biosynthesis; ubiquinone biosynthesis. Catalyzes the hydroxylation of 2-nonaprenyl-3-methyl-6-methoxy-1,4-benzoquinol during ubiquinone biosynthesis. In Francisella philomiragia subsp. philomiragia (strain ATCC 25017 / CCUG 19701 / FSC 153 / O#319-036), this protein is 3-demethoxyubiquinol 3-hydroxylase.